The primary structure comprises 576 residues: Cyclic nucleotide-binding domain-containing protein 2 (576 aa).

Position 116 to 239 (116 to 239 (SYRNYAEPLQ…DAQYRFEFFR (124 aa))) interacts with a nucleoside 3',5'-cyclic phosphate.

The protein resides in the cytoplasm. The protein localises to the cytosol. In terms of biological role, essential for male fertility. Plays an important role in spermatogenesis and regulates sperm motility by controlling the development of the flagellar bending of sperm. This Homo sapiens (Human) protein is Cyclic nucleotide-binding domain-containing protein 2 (CNBD2).